The sequence spans 1364 residues: ABC-type transporter cns4 (1364 aa).

The ABC transporter 1 domain occupies 42 to 290 (SRVKESRAKP…MEEMGFLYTD (249 aa)). 2 N-linked (GlcNAc...) asparagine glycosylation sites follow: asparagine 152 and asparagine 214. 5 helical membrane passes run 435-455 (LFFA…GSFA), 483-503 (IPLI…MTGL), 508-528 (EAFL…TALF), 540-560 (AAIK…GFLI), and 567-587 (PWLG…AVLS). A glycan (N-linked (GlcNAc...) asparagine) is linked at asparagine 610. A helical membrane pass occupies residues 650–670 (FAIVWVWWALFVILTVYFTSN). 3 N-linked (GlcNAc...) asparagine glycosylation sites follow: asparagine 689, asparagine 711, and asparagine 739. The segment at 697–732 (DEEVGSGPDSHDSRNRSGISPIGDKQETSTDGPSKI) is disordered. In terms of domain architecture, ABC transporter 2 spans 737 to 985 (IRNTSVFTWK…TVNEYFGRNG (249 aa)). 779-786 (GSSGAGKT) is a binding site for ATP. 6 helical membrane-spanning segments follow: residues 1076 to 1094 (LMLH…WKIG), 1105 to 1125 (FTIF…QPLF), 1146 to 1166 (AFAT…AVVY), 1185 to 1205 (AVFF…QAIA), 1211 to 1231 (AIFA…FCGV), and 1245 to 1265 (WLYY…FTTF).

Belongs to the ABC transporter superfamily. ABCG family. PDR (TC 3.A.1.205) subfamily.

It is found in the cell membrane. ABC-type transporter; part of the gene cluster that mediates the biosynthesis of cordycepin (COR) and pentostatin (PTN), two adenosine analogs with related bioactivity profiles as both mimic adenosine and can inhibit some of the processes that are adenosine dependent. Mediates the pumping of pentostatin but not of cordycepin out of fungal cells. Decreasing intracellular pentostatin releases adenosine deaminase (ADA) inhibition, allowing ADA to deaminate cordycepin into non-toxic 3'-d. The sequence is that of ABC-type transporter cns4 from Cordyceps militaris (strain CM01) (Caterpillar fungus).